Here is a 292-residue protein sequence, read N- to C-terminus: uncharacterized protein (292 aa).

It localises to the virion. This is an uncharacterized protein from Acanthamoeba polyphaga (Amoeba).